The chain runs to 362 residues: tRNA/tmRNA (uracil-C(5))-methyltransferase (362 aa).

S-adenosyl-L-methionine is bound by residues Gln-186, Tyr-214, Asn-219, Glu-235, and Asp-295. The active-site Nucleophile is the Cys-320. Glu-354 acts as the Proton acceptor in catalysis.

Belongs to the class I-like SAM-binding methyltransferase superfamily. RNA M5U methyltransferase family. TrmA subfamily.

The enzyme catalyses uridine(54) in tRNA + S-adenosyl-L-methionine = 5-methyluridine(54) in tRNA + S-adenosyl-L-homocysteine + H(+). It catalyses the reaction uridine(341) in tmRNA + S-adenosyl-L-methionine = 5-methyluridine(341) in tmRNA + S-adenosyl-L-homocysteine + H(+). Functionally, dual-specificity methyltransferase that catalyzes the formation of 5-methyluridine at position 54 (m5U54) in all tRNAs, and that of position 341 (m5U341) in tmRNA (transfer-mRNA). The chain is tRNA/tmRNA (uracil-C(5))-methyltransferase from Stutzerimonas stutzeri (strain A1501) (Pseudomonas stutzeri).